Reading from the N-terminus, the 366-residue chain is tRNA N6-adenosine threonylcarbamoyltransferase (366 aa).

Fe cation-binding residues include H119 and H123. Substrate-binding positions include 142–146 (LVSGG), D175, G188, D192, and N281. Fe cation is bound at residue D309.

The protein belongs to the KAE1 / TsaD family. Fe(2+) is required as a cofactor.

The protein localises to the cytoplasm. The enzyme catalyses L-threonylcarbamoyladenylate + adenosine(37) in tRNA = N(6)-L-threonylcarbamoyladenosine(37) in tRNA + AMP + H(+). Required for the formation of a threonylcarbamoyl group on adenosine at position 37 (t(6)A37) in tRNAs that read codons beginning with adenine. Is involved in the transfer of the threonylcarbamoyl moiety of threonylcarbamoyl-AMP (TC-AMP) to the N6 group of A37, together with TsaE and TsaB. TsaD likely plays a direct catalytic role in this reaction. This chain is tRNA N6-adenosine threonylcarbamoyltransferase, found in Synechococcus sp. (strain JA-3-3Ab) (Cyanobacteria bacterium Yellowstone A-Prime).